We begin with the raw amino-acid sequence, 134 residues long: Urease subunit beta (134 aa).

The protein belongs to the urease beta subunit family. Heterotrimer of UreA (gamma), UreB (beta) and UreC (alpha) subunits. Three heterotrimers associate to form the active enzyme.

It localises to the cytoplasm. The catalysed reaction is urea + 2 H2O + H(+) = hydrogencarbonate + 2 NH4(+). It participates in nitrogen metabolism; urea degradation; CO(2) and NH(3) from urea (urease route): step 1/1. This Staphylococcus saprophyticus subsp. saprophyticus (strain ATCC 15305 / DSM 20229 / NCIMB 8711 / NCTC 7292 / S-41) protein is Urease subunit beta.